The primary structure comprises 78 residues: MSRVCQVTGKSPITGNNVSHANNKTKRRFLPNLQTHRFWVENEKRFVKLRVSTKGMRIIDKVGIDKVLSDIRARGGKV.

Positions 1–21 (MSRVCQVTGKSPITGNNVSHA) are disordered. Over residues 8–21 (TGKSPITGNNVSHA) the composition is skewed to polar residues.

The protein belongs to the bacterial ribosomal protein bL28 family.

The polypeptide is Large ribosomal subunit protein bL28 (Hahella chejuensis (strain KCTC 2396)).